A 309-amino-acid chain; its full sequence is Protease HtpX homolog (309 aa).

A run of 2 helical transmembrane segments spans residues 7–27 (FILL…IGGP) and 28–48 (TGML…YWNA). Position 134 (histidine 134) interacts with Zn(2+). The active site involves glutamate 135. Histidine 138 lines the Zn(2+) pocket. The next 2 helical transmembrane spans lie at 149-169 (VTAT…FFGG) and 177-197 (PGGL…AMLV). Position 206 (glutamate 206) interacts with Zn(2+). The disordered stretch occupies residues 289 to 309 (TRGRSGTAVPTGATGKSGPWG).

Belongs to the peptidase M48B family. Zn(2+) serves as cofactor.

The protein resides in the cell inner membrane. In Caulobacter sp. (strain K31), this protein is Protease HtpX homolog.